Reading from the N-terminus, the 133-residue chain is ATP synthase epsilon chain, chloroplastic (133 aa).

The protein belongs to the ATPase epsilon chain family. In terms of assembly, F-type ATPases have 2 components, CF(1) - the catalytic core - and CF(0) - the membrane proton channel. CF(1) has five subunits: alpha(3), beta(3), gamma(1), delta(1), epsilon(1). CF(0) has three main subunits: a, b and c.

The protein resides in the plastid. It is found in the chloroplast thylakoid membrane. In terms of biological role, produces ATP from ADP in the presence of a proton gradient across the membrane. The sequence is that of ATP synthase epsilon chain, chloroplastic from Trieres chinensis (Marine centric diatom).